Reading from the N-terminus, the 85-residue chain is RNA-binding protein Hfq (85 aa).

Residues 10–70 (DIFLNGARKN…ISTINPAKPL (61 aa)) enclose the Sm domain.

This sequence belongs to the Hfq family. As to quaternary structure, homohexamer.

RNA chaperone that binds small regulatory RNA (sRNAs) and mRNAs to facilitate mRNA translational regulation in response to envelope stress, environmental stress and changes in metabolite concentrations. Also binds with high specificity to tRNAs. The chain is RNA-binding protein Hfq from Clostridium botulinum (strain 657 / Type Ba4).